Consider the following 258-residue polypeptide: 5'-nucleotidase SurE (258 aa).

Positions 9, 10, 40, and 95 each coordinate a divalent metal cation.

Belongs to the SurE nucleotidase family. A divalent metal cation serves as cofactor.

It is found in the cytoplasm. The catalysed reaction is a ribonucleoside 5'-phosphate + H2O = a ribonucleoside + phosphate. Nucleotidase that shows phosphatase activity on nucleoside 5'-monophosphates. This chain is 5'-nucleotidase SurE, found in Nitratiruptor sp. (strain SB155-2).